A 121-amino-acid chain; its full sequence is Aspartate 1-decarboxylase (121 aa).

The Schiff-base intermediate with substrate; via pyruvic acid role is filled by Ser25. Ser25 carries the post-translational modification Pyruvic acid (Ser). Thr57 provides a ligand contact to substrate. Tyr58 (proton donor) is an active-site residue. 73–75 (GAA) contacts substrate.

It belongs to the PanD family. Heterooctamer of four alpha and four beta subunits. The cofactor is pyruvate. Is synthesized initially as an inactive proenzyme, which is activated by self-cleavage at a specific serine bond to produce a beta-subunit with a hydroxyl group at its C-terminus and an alpha-subunit with a pyruvoyl group at its N-terminus.

It is found in the cytoplasm. The enzyme catalyses L-aspartate + H(+) = beta-alanine + CO2. The protein operates within cofactor biosynthesis; (R)-pantothenate biosynthesis; beta-alanine from L-aspartate: step 1/1. In terms of biological role, catalyzes the pyruvoyl-dependent decarboxylation of aspartate to produce beta-alanine. This Maricaulis maris (strain MCS10) (Caulobacter maris) protein is Aspartate 1-decarboxylase.